The following is a 66-amino-acid chain: Cold shock-like protein CspLB (66 aa).

The CSD domain occupies 4–63 (GTVKWFNSEKGFGFIEVEGGDDVFVHFSAIEGEGFKTLDEGQSVEFEIVEGQRGPQAEKV).

In terms of assembly, homodimer.

The protein resides in the cytoplasm. The sequence is that of Cold shock-like protein CspLB (cspLB) from Listeria monocytogenes serovar 1/2a (strain ATCC BAA-679 / EGD-e).